The chain runs to 873 residues: MSRYDPAATESRWQAAWDEAGVFTARHDPSRPKYYVLEMFPYPSGRIHMGHVRNYTMGDVVARQKAAAGYSVLHPMGWDAFGMPAENAAMERGGHPKDWTYGNIADMRAQMKPLGLSIDWSREFATCDPEYYGQQQAMFIDMLEAGLIYRKNAVVNWDPVDMTVLANEQVIDGKGWRSNAPVERRELTQWFFRISDYAGELLEALDRLKDWPEKVRLMQANWIGQSRGLQFAFSTVNAPEGFDRLEVYTTRPDTLLGASFAAISPDHPLAKHLERHDAGVAEFVAECRRVGTSEEALEKAEKKGFDTGIRVRHPFDTALELPVYIANFILMDYGTGAIFGCPAHDQRDFEFASKYGLPIPPVFVAEGTEEAPLTEAFVPMKSERVAYVRGFAGAEIQTGEEAVAAAIDFCESKGVGRGVTNYRLRDWGISRQRYWGCPIPVIHCETCGVVPEAKENLPVRLPDDVTFDVPGNPLDRHPTWRDCTCPKCGAKARRETDTMDTFVDSSWYYARFTAPRATTPTDPEEAEYWMNVDQYIGGIEHAILHLLYSRFFARAMQKTGHLPAKAIEPFNALFTQGMVTHEAYYSEEAKQEPVWQGMLEPGESPDTQMTVRHITYHFPEEVERTEDGAILKTTGQKLKVIPSTKMSKSKKNVVDPMNIISQFGADTARWFVMSDSPPERDVEWTASGAEAAFKHLGRVWRLADEIARAEGAPTAEDVALDRATAKAIAEVTQGIEGFAFNKAIAKLYEFTNTLSRSGAGAEAKRRAMRTMAQLMSPMVPHLAEEVWSMLGGEGLVAQAPWPKADPALLVDDMVTLPIQINGKRRAEVTVPKDMAASEVEKLVLADEAVQRALSGGAPKKLIVVPGRIVNVVI.

The 'HIGH' region signature appears at 41–51 (PYPSGRIHMGH). The 'KMSKS' region motif lies at 645–649 (KMSKS). ATP is bound at residue Lys648.

The protein belongs to the class-I aminoacyl-tRNA synthetase family.

The protein localises to the cytoplasm. It carries out the reaction tRNA(Leu) + L-leucine + ATP = L-leucyl-tRNA(Leu) + AMP + diphosphate. In Cereibacter sphaeroides (strain ATCC 17025 / ATH 2.4.3) (Rhodobacter sphaeroides), this protein is Leucine--tRNA ligase.